A 630-amino-acid polypeptide reads, in one-letter code: A-type voltage-gated potassium channel KCND2 (630 aa).

Over 1-184 the chain is Cytoplasmic; the sequence is MAAGVAAWLP…FENPHTSTMA (184 aa). The segment at 2–20 is interaction with KCNIP1, KCNIP2, and other family members; it reads AAGVAAWLPFARAAAIGWM. Threonine 38 bears the Phosphothreonine mark. Residues 71–90 are interaction with KCNIP1; it reads ERDFFYHPETQQYFFDRDPD. Zn(2+) is bound by residues histidine 105, cysteine 111, cysteine 132, and cysteine 133. The chain crosses the membrane as a helical span at residues 185 to 206; the sequence is LVFYYVTGFFIAVSVIANVVET. Residues 207-226 are Extracellular-facing; it reads VPCGSSPGHIKELPCGERYA. The chain crosses the membrane as a helical span at residues 227-249; that stretch reads VAFFCLDTACVMIFTVEYLLRLA. At 250-256 the chain is on the cytoplasmic side; it reads AAPSRYR. The helical transmembrane segment at 257 to 281 threads the bilayer; that stretch reads FVRSVMSIIDVVAILPYYIGLVMTD. The Extracellular segment spans residues 282-287; the sequence is NEDVSG. A helical; Voltage-sensor membrane pass occupies residues 288-307; the sequence is AFVTLRVFRVFRIFKFSRHS. Residues 308–321 are Cytoplasmic-facing; it reads QGLRILGYTLKSCA. An S4-S5 linker region spans residues 308–321; that stretch reads QGLRILGYTLKSCA. A helical membrane pass occupies residues 322–345; it reads SELGFLLFSLTMAIIIFATVMFYA. Residues 346–357 are Extracellular-facing; sequence EKGSSASKFTSI. The segment at residues 358–369 is an intramembrane region (helical); sequence PAAFWYTIVTMT. The K(+) site is built by threonine 370, leucine 371, glycine 372, and tyrosine 373. The short motif at 370–375 is the Selectivity filter element; that stretch reads TLGYGD. The stretch at 370–377 is an intramembrane region; sequence TLGYGDMV. Over 378–380 the chain is Extracellular; the sequence is PKT. The chain crosses the membrane as a helical span at residues 381–403; that stretch reads IAGKIFGSICSLSGVLVIALPVP. Topologically, residues 404–630 are cytoplasmic; sequence VIVSNFSRIY…GGNIVRVSAL (227 aa). Serine 438 carries the post-translational modification Phosphoserine. The interval 474-489 is required for dendritic targeting; sequence FETQHHHLLHCLEKTT. The tract at residues 474-630 is important for normal channel activation and inactivation, for interaction with KCNIP2, and probably other family members as well; the sequence is FETQHHHLLH…GGNIVRVSAL (157 aa). Residues serine 548, serine 552, serine 572, and serine 575 each carry the phosphoserine modification. The segment at 600–623 is disordered; sequence IPTPPVTTPEGDDRPESPEYSGGN. Threonine 602 and threonine 607 each carry phosphothreonine. Serine 616 carries the post-translational modification Phosphoserine. A PDZ-binding motif is present at residues 627–630; the sequence is VSAL.

It belongs to the potassium channel family. D (Shal) (TC 1.A.1.2) subfamily. Kv4.2/KCND2 sub-subfamily. In terms of assembly, homotetramer or heterotetramer with KCND1 or KCND3. Associates with the regulatory subunits KCNIP2, KCNIP3 and KCNIP4. Interacts with the regulatory subunit KCNIP1; this interaction mediates the capture of both the N- and C-terminus of KCND2, preventing N-type inactivation and stabilizing the S6 conformation, thereby accelerating closed state inactivation and recovery. Interacts with DPP10, DLG4 and DLG1. In vivo, probably exists as heteromeric complex containing variable proportions of KCND1, KCND2, KCND3, KCNIP1, KCNIP2, KCNIP3, KCNIP4, DPP6 and DPP10. The tetrameric channel can associate with up to four regulatory subunits, such as KCNIP2 or KCNIP4. Interaction with KCNIP3 promotes tetramerization and formation of a functional potassium channel. Interaction with four KCNIP4 chains does not reduce interaction with DPP10. Probably part of a complex consisting of KCNIP1, KCNIP2 isoform 3 and KCND2. Interacts with FLNA and FLNC. Interacts with NCS1/FREQ. Identified in a complex with cAMP-dependent protein kinase (PKA), CAV3, AKAP6 and KCND3 in cardiac myocytes. Interacts (via S1 and S2 helices) with DPP6; this interaction stabilizes the conformation of the S1-S2 helices and facilitates S4 conformational change, including S4 sliding up and down, thereby accelerating activation, inactivation, and recovery. Phosphorylation at Ser-438 in response to MAPK activation is increased in stimulated dendrites. Interaction with KCNIP2 and DPP6 propomtes phosphorylation by PKA at Ser-552. Phosphorylation at Ser-552 has no effect on interaction with KCNIP3, but is required for the regulation of channel activity by KCNIP3. Phosphorylation at Ser-552 leads to KCND2 internalization. Phosphorylated by MAPK in response to signaling via the metabotropic glutamate receptor GRM5. Phosphorylation at Ser-616 is required for the down-regulation of neuronal A-type currents in response to signaling via GRM5. In terms of tissue distribution, detected in brain cortex, hippocampus, dentate gyrus, thalamus and cerebellum. Detected in neurons from the primary visual cortex. Detected in the supraoptic nucleus in hypothalamus, in hippocampus and the habenular nucleus of the thalamus. Detected in the bed nucleus of the stria terminalis. Detected in dendritic fields in the hippocampus CA1 layer, in stratum radiatum, stratum oriens, stratum lacunosum-moleculare and stratum pyramidale. Detected in dendritic fields in the hippocampus CA3 layer and in dentate gyrus. Detected in the cerebellum granule cell layer, where it localizes at synapses. Detected in the main olfactory bulb, especially in the granule cell layer and the external plexiform layer, but also the mitral layer. Detected in heart atrium and ventricle. Detected in heart left ventricle (at protein level). Highly expressed in heart and throughout the brain, with similar levels in cortex and hypothalamus, and much higher levels in hippocampus, dentate gyrus and the habenular nucleus of the thalamus. Detected in brain, and at lower levels in heart atrium and ventricle. Detected in neurons from the bed nucleus of the stria terminalis. Detected in aorta, cardiac and smooth muscle.

The protein localises to the cell membrane. It localises to the cell projection. Its subcellular location is the dendrite. The protein resides in the synapse. It is found in the perikaryon. The protein localises to the postsynaptic cell membrane. It localises to the dendritic spine. Its subcellular location is the sarcolemma. The protein resides in the cell junction. It is found in the membrane. The protein localises to the caveola. The catalysed reaction is K(+)(in) = K(+)(out). Its activity is regulated as follows. Inhibited by 5 mM 4-aminopyridine (4-AP). Not inhibited by dendrotoxins and by tetraethylammonium (TEA). Inhibited by 10 mM flecainide and 20 mM quinidine. Inhibited by the heteropodatoxins HpTx(1), HpTx(2), and HpTx(3). In terms of biological role, voltage-gated potassium channel that mediates transmembrane potassium transport in excitable membranes, primarily in the brain, but also in rodent heart. Mediates the major part of the dendritic A-type current I(SA) in brain neurons. This current is activated at membrane potentials that are below the threshold for action potentials. It regulates neuronal excitability, prolongs the latency before the first spike in a series of action potentials, regulates the frequency of repetitive action potential firing, shortens the duration of action potentials and regulates the back-propagation of action potentials from the neuronal cell body to the dendrites. Contributes to the regulation of the circadian rhythm of action potential firing in suprachiasmatic nucleus neurons, which regulates the circadian rhythm of locomotor activity. Functions downstream of the metabotropic glutamate receptor GRM5 and plays a role in neuronal excitability and in nociception mediated by activation of GRM5. Mediates the transient outward current I(to) in rodent heart left ventricle apex cells, but not in human heart, where this current is mediated by another family member. Forms tetrameric potassium-selective channels through which potassium ions pass in accordance with their electrochemical gradient. The channel alternates between opened and closed conformations in response to the voltage difference across the membrane. Can form functional homotetrameric channels and heterotetrameric channels that contain variable proportions of KCND2 and KCND3; channel properties depend on the type of pore-forming alpha subunits that are part of the channel. In vivo, membranes probably contain a mixture of heteromeric potassium channel complexes. Interaction with specific isoforms of the regulatory subunits KCNIP1, KCNIP2, KCNIP3 or KCNIP4 strongly increases expression at the cell surface and thereby increases channel activity; it modulates the kinetics of channel activation and inactivation, shifts the threshold for channel activation to more negative voltage values, shifts the threshold for inactivation to less negative voltages and accelerates recovery after inactivation. Likewise, interaction with DPP6 or DPP10 promotes expression at the cell membrane and regulates both channel characteristics and activity. Upon depolarization, the channel goes from a resting closed state (C state) to an activated but non-conducting state (C* state), from there, the channel may either inactivate (I state) or open (O state). In Rattus norvegicus (Rat), this protein is A-type voltage-gated potassium channel KCND2.